A 331-amino-acid polypeptide reads, in one-letter code: Phenylalanine--tRNA ligase alpha subunit (331 aa).

Residue glutamate 252 coordinates Mg(2+).

It belongs to the class-II aminoacyl-tRNA synthetase family. Phe-tRNA synthetase alpha subunit type 1 subfamily. As to quaternary structure, tetramer of two alpha and two beta subunits. The cofactor is Mg(2+).

The protein localises to the cytoplasm. The catalysed reaction is tRNA(Phe) + L-phenylalanine + ATP = L-phenylalanyl-tRNA(Phe) + AMP + diphosphate + H(+). This Hahella chejuensis (strain KCTC 2396) protein is Phenylalanine--tRNA ligase alpha subunit.